The sequence spans 961 residues: Lon protease homolog, mitochondrial (961 aa).

The N-terminal 67 residues, 1–67 (MAGGTGCVRL…SPAAAGHWRG (67 aa)), are a transit peptide targeting the mitochondrion. 2 disordered regions span residues 76–103 (GGGA…GSAG) and 220–262 (QLEV…VVVG). One can recognise a Lon N-terminal domain in the interval 125 to 371 (LPLIAVTRNP…KALSLLKKEF (247 aa)). A compositionally biased stretch (basic residues) spans 235–244 (KLRKKPKRGK). Basic and acidic residues predominate over residues 245–257 (KEAEEDGATKRPL). ATP is bound at residue 524–531 (GPPGVGKT). The Lon proteolytic domain maps to 760–951 (VTPPGVVMGL…REIFDIAFPE (192 aa)). The span at 784–801 (SLRRPRDRDSDKGDKDGS) shows a compositional bias: basic and acidic residues. The tract at residues 784–803 (SLRRPRDRDSDKGDKDGSLE) is disordered. Active-site residues include serine 857 and lysine 900.

Belongs to the peptidase S16 family. Homohexamer. Organized in a ring with a central cavity. The ATP-binding and proteolytic domains (AP-domain) form a hexameric chamber, while the N-terminal domain is arranged as a trimer of dimers. DNA and RNA binding is stimulated by substrate and inhibited by ATP binding. Interacts with TWNK and mitochondrial DNA polymerase subunit POLG.

It localises to the mitochondrion matrix. It catalyses the reaction Hydrolysis of proteins in presence of ATP.. Functionally, ATP-dependent serine protease that mediates the selective degradation of misfolded, unassembled or oxidatively damaged polypeptides as well as certain short-lived regulatory proteins in the mitochondrial matrix. Endogenous substrates include mitochondrial steroidogenic acute regulatory (StAR) protein, DELE1, helicase Twinkle (TWNK) and the large ribosomal subunit protein MRPL32/bL32m. MRPL32/bL32m is protected from degradation by LONP1 when it is bound to a nucleic acid (RNA), but TWNK is not. May also have a chaperone function in the assembly of inner membrane protein complexes. Participates in the regulation of mitochondrial gene expression and in the maintenance of the integrity of the mitochondrial genome. Binds to mitochondrial promoters and RNA in a single-stranded, site-specific, and strand-specific manner. May regulate mitochondrial DNA replication and/or gene expression using site-specific, single-stranded DNA binding to target the degradation of regulatory proteins binding to adjacent sites in mitochondrial promoters. This Bos taurus (Bovine) protein is Lon protease homolog, mitochondrial.